The primary structure comprises 103 residues: Urease subunit beta (103 aa).

It belongs to the urease beta subunit family. Heterotrimer of UreA (gamma), UreB (beta) and UreC (alpha) subunits. Three heterotrimers associate to form the active enzyme.

The protein localises to the cytoplasm. It catalyses the reaction urea + 2 H2O + H(+) = hydrogencarbonate + 2 NH4(+). It participates in nitrogen metabolism; urea degradation; CO(2) and NH(3) from urea (urease route): step 1/1. The polypeptide is Urease subunit beta (Streptomyces coelicolor (strain ATCC BAA-471 / A3(2) / M145)).